The sequence spans 143 residues: Large ribosomal subunit protein uL11 (143 aa).

The protein belongs to the universal ribosomal protein uL11 family. In terms of assembly, part of the ribosomal stalk of the 50S ribosomal subunit. Interacts with L10 and the large rRNA to form the base of the stalk. L10 forms an elongated spine to which L12 dimers bind in a sequential fashion forming a multimeric L10(L12)X complex. Post-translationally, one or more lysine residues are methylated.

Its function is as follows. Forms part of the ribosomal stalk which helps the ribosome interact with GTP-bound translation factors. This is Large ribosomal subunit protein uL11 from Azoarcus sp. (strain BH72).